A 419-amino-acid chain; its full sequence is Tyrosine--tRNA ligase (419 aa).

Tyr-34 serves as a coordination point for L-tyrosine. The 'HIGH' region signature appears at 39–48 (PSGDSMHIGH). Residues Tyr-168 and Gln-172 each contribute to the L-tyrosine site. The 'KMSKS' region signature appears at 230-234 (KFGKS). Lys-233 lines the ATP pocket. An S4 RNA-binding domain is found at 352 to 418 (ANLVDWLVTL…GKKKYFLVSY (67 aa)).

The protein belongs to the class-I aminoacyl-tRNA synthetase family. TyrS type 1 subfamily. As to quaternary structure, homodimer.

It is found in the cytoplasm. The enzyme catalyses tRNA(Tyr) + L-tyrosine + ATP = L-tyrosyl-tRNA(Tyr) + AMP + diphosphate + H(+). In terms of biological role, catalyzes the attachment of tyrosine to tRNA(Tyr) in a two-step reaction: tyrosine is first activated by ATP to form Tyr-AMP and then transferred to the acceptor end of tRNA(Tyr). The sequence is that of Tyrosine--tRNA ligase from Listeria monocytogenes serovar 1/2a (strain ATCC BAA-679 / EGD-e).